We begin with the raw amino-acid sequence, 137 residues long: Phosphoribosyl-ATP pyrophosphatase (137 aa).

Residues 114–124 are compositionally biased toward basic and acidic residues; sequence EGTSGIEEKAL. The interval 114–137 is disordered; sequence EGTSGIEEKALRKSLQRAAEEAQP.

This sequence belongs to the PRA-PH family.

It is found in the cytoplasm. It carries out the reaction 1-(5-phospho-beta-D-ribosyl)-ATP + H2O = 1-(5-phospho-beta-D-ribosyl)-5'-AMP + diphosphate + H(+). Its pathway is amino-acid biosynthesis; L-histidine biosynthesis; L-histidine from 5-phospho-alpha-D-ribose 1-diphosphate: step 2/9. The polypeptide is Phosphoribosyl-ATP pyrophosphatase (Paracidovorax citrulli (strain AAC00-1) (Acidovorax citrulli)).